The chain runs to 453 residues: tRNA modification GTPase MnmE (453 aa).

Residues Arg-23, Glu-80, and Lys-120 each coordinate (6S)-5-formyl-5,6,7,8-tetrahydrofolate. Residues 216 to 375 (GSKIVIIGKP…LIKYLKDLNC (160 aa)) form the TrmE-type G domain. A K(+)-binding site is contributed by Asn-226. GTP-binding positions include 226–231 (NSGKSS), 245–251 (TSIEGTT), and 270–273 (DTAG). Residue Ser-230 participates in Mg(2+) binding. K(+) contacts are provided by Thr-245, Ile-247, and Thr-250. Thr-251 contributes to the Mg(2+) binding site. Lys-453 serves as a coordination point for (6S)-5-formyl-5,6,7,8-tetrahydrofolate.

Belongs to the TRAFAC class TrmE-Era-EngA-EngB-Septin-like GTPase superfamily. TrmE GTPase family. In terms of assembly, homodimer. Heterotetramer of two MnmE and two MnmG subunits. The cofactor is K(+).

It localises to the cytoplasm. Its function is as follows. Exhibits a very high intrinsic GTPase hydrolysis rate. Involved in the addition of a carboxymethylaminomethyl (cmnm) group at the wobble position (U34) of certain tRNAs, forming tRNA-cmnm(5)s(2)U34. The chain is tRNA modification GTPase MnmE from Wigglesworthia glossinidia brevipalpis.